Here is a 321-residue protein sequence, read N- to C-terminus: Isopenicillin N synthase (321 aa).

Residues 1-42 (MPVLMPSADVPTIDISPQLFGTDPTPRRTSRGRSTRPARGSG) form a disordered region. 3 residues coordinate isopenicillin N: arginine 87, tyrosine 91, and tyrosine 188. Positions 87, 91, 188, 213, and 215 each coordinate N-[(5S)-5-amino-5-carboxypentanoyl]-L-cysteinyl-D-valine. The Fe2OG dioxygenase domain maps to 179–287 (TLSAVSMIRY…RLSLPFFLHA (109 aa)). Positions 213, 215, and 269 each coordinate Fe(2+). Residue arginine 278 coordinates 2-oxoglutarate. Serine 280 lines the isopenicillin N pocket. Serine 280 provides a ligand contact to N-[(5S)-5-amino-5-carboxypentanoyl]-L-cysteinyl-D-valine.

The protein belongs to the iron/ascorbate-dependent oxidoreductase family. Fe cation serves as cofactor. It depends on L-ascorbate as a cofactor.

The enzyme catalyses N-[(5S)-5-amino-5-carboxypentanoyl]-L-cysteinyl-D-valine + O2 = isopenicillin N + 2 H2O. It functions in the pathway antibiotic biosynthesis; penicillin G biosynthesis; penicillin G from L-alpha-aminoadipate and L-cysteine and L-valine: step 2/3. Removes, in the presence of oxygen, 4 hydrogen atoms from delta-L-(alpha-aminoadipyl)-L-cysteinyl-D-valine (ACV) to form the azetidinone and thiazolidine rings of isopenicillin. This is Isopenicillin N synthase (pcbC) from Streptantibioticus cattleyicolor (Streptomyces cattleya).